Consider the following 312-residue polypeptide: Probable splicing factor, arginine/serine-rich 1 (312 aa).

The RRM 1 domain maps to 3 to 73; it reads ARIYIGRLTS…ERVILDYSKP (71 aa). Disordered regions lie at residues 69 to 125 and 196 to 312; these read DYSK…GRPY and KMID…DGDN. Gly residues predominate over residues 74–90; sequence RGGGGDRGGFGGGGRGG. Residues 103 to 121 are compositionally biased toward basic and acidic residues; it reads GRDRFDRYDRGPPRRESRY. The RRM 2 domain maps to 129-202; sequence HRVVVENLSS…RKIKMIDDSQ (74 aa). Positions 206–259 are enriched in basic residues; sequence SRSRSNSRSRSRSRSRDRRRSRSRSSSRSKSRSRSPPKRSRRESKSKSRSRSRS.

Belongs to the splicing factor SR family. Post-translationally, extensively phosphorylated on serine residues in the RS domain.

The protein resides in the nucleus. In terms of biological role, plays a functionally redundant role in spermatogenesis and growth rate control. This Caenorhabditis elegans protein is Probable splicing factor, arginine/serine-rich 1 (rsp-1).